A 930-amino-acid chain; its full sequence is Protocadherin gamma-A4 (930 aa).

A signal peptide spans 1 to 27; it reads MAAPYKSDRRGLIWICIFLGSLCDIRA. 6 consecutive Cadherin domains span residues 28–132, 133–241, 242–346, 347–451, 452–561, and 569–682; these read EQIR…APSF, GAQQ…APVF, TQPE…APEV, TVTS…PPTF, THAS…TPEI, and DGST…APID. At 28-691 the chain is on the extracellular side; it reads EQIRYSVPEE…DQEDSDITLY (664 aa). Asparagine 418 and asparagine 544 each carry an N-linked (GlcNAc...) asparagine glycan. Residues 692 to 712 form a helical membrane-spanning segment; that stretch reads LVVAVAAVSCVFLAFVIVLLI. The Cytoplasmic segment spans residues 713 to 930; it reads HRLRRWHSTR…KKKSGKKEKK (218 aa). 2 disordered regions span residues 803 to 839 and 900 to 930; these read SSLQ…WPNN and ATLT…KEKK. Over residues 920–930 the composition is skewed to basic residues; it reads NKKKSGKKEKK.

The protein resides in the cell membrane. Potential calcium-dependent cell-adhesion protein. May be involved in the establishment and maintenance of specific neuronal connections in the brain. In Mus musculus (Mouse), this protein is Protocadherin gamma-A4.